A 96-amino-acid chain; its full sequence is Small ribosomal subunit protein bS6 (96 aa).

The protein belongs to the bacterial ribosomal protein bS6 family.

Binds together with bS18 to 16S ribosomal RNA. This Mycolicibacterium paratuberculosis (strain ATCC BAA-968 / K-10) (Mycobacterium paratuberculosis) protein is Small ribosomal subunit protein bS6.